The primary structure comprises 155 residues: Small ribosomal subunit protein uS7cz/uS7cy (155 aa).

This sequence belongs to the universal ribosomal protein uS7 family. In terms of assembly, part of the 30S ribosomal subunit.

Its subcellular location is the plastid. It is found in the chloroplast. Its function is as follows. One of the primary rRNA binding proteins, it binds directly to 16S rRNA where it nucleates assembly of the head domain of the 30S subunit. The protein is Small ribosomal subunit protein uS7cz/uS7cy (rps7-A) of Phalaenopsis aphrodite subsp. formosana (Moth orchid).